A 357-amino-acid polypeptide reads, in one-letter code: MKKYLLLALLPFLYACSNSSNQGINYDEAFAKDTQGLDILTGQFSHNIDRIWGVNELLVASRKDYVKYTDSFYTRSHVSFDEGNIVIETQQDLNRLHNAIVHTLLMGADAKGIDLFASGDVPISSRPFLLGQVVDHQGQHIANQVIASNFATYLIQNKLQTRRLQNGHTVQFVSVPMIANHVEVRARKYLPLIRKAAQRYGIDESLILGIMQTESSFNPYAISYANAIGLMQVVPHTAGRDVFAMKGKGGQPSTRYLYDPANNIDAGVSYLWILQNQYLDGITNPTSKRFAMISAYNSGAGAVLRVFDNDKDTAIYKINQMYPEQVYRILTTVHPSSQARNYLLKVDKAQKKFRVRR.

A signal peptide spans M1–A15. The N-palmitoyl cysteine moiety is linked to residue C16. C16 carries S-diacylglycerol cysteine lipidation.

It belongs to the transglycosylase Slt family.

The protein localises to the cell outer membrane. It carries out the reaction Exolytic cleavage of the (1-&gt;4)-beta-glycosidic linkage between N-acetylmuramic acid (MurNAc) and N-acetylglucosamine (GlcNAc) residues in peptidoglycan, from either the reducing or the non-reducing ends of the peptidoglycan chains, with concomitant formation of a 1,6-anhydrobond in the MurNAc residue.. Functionally, murein-degrading enzyme. May play a role in recycling of muropeptides during cell elongation and/or cell division. This chain is Membrane-bound lytic murein transglycosylase C, found in Haemophilus influenzae (strain ATCC 51907 / DSM 11121 / KW20 / Rd).